A 790-amino-acid chain; its full sequence is Probable copper-transporting ATPase SynA (790 aa).

At 1–105 the chain is on the cytoplasmic side; that stretch reads MPAAIVHSAD…IPPLQQQRLQ (105 aa). An HMA domain is found at 14–81; the sequence is TSILVEVEGM…EITGLGFRAQ (68 aa). Residues C25 and C28 each contribute to the Cu cation site. The helical transmembrane segment at 106–125 threads the bilayer; it reads LAIAAFLLIVSSWGHLGHWL. Residues 126–134 are Extracellular-facing; sequence DHPLPGTDQ. A helical transmembrane segment spans residues 135-154; that stretch reads LWFHALLAIWALLGPGRSIL. Over 155 to 166 the chain is Cytoplasmic; the sequence is QAGWQGLRCGAP. Residues 167 to 189 form a helical membrane-spanning segment; the sequence is NMNSLVLLGTGSAYLASLVALLW. Residues 190 to 193 lie on the Extracellular side of the membrane; it reads PQLG. Residues 194–211 traverse the membrane as a helical segment; sequence WVCFLDEPVMLLGFILLG. The Cytoplasmic segment spans residues 212-357; that stretch reads RTLEEQARFR…RKAPVQRFAD (146 aa). The helical transmembrane segment at 358 to 380 threads the bilayer; it reads AIAGRFVYGVCAIAALTFGFWAT. The Extracellular portion of the chain corresponds to 381-416; that stretch reads LGSRWWPQVLQQPLPGLLIHAPHHGMEMAHPHSHSP. The helical transmembrane segment at 417 to 439 threads the bilayer; it reads LLLALTLAISVLVVACPCALGLA. Residues 440–726 lie on the Cytoplasmic side of the membrane; sequence TPTAILVATG…QMGLRTIRQN (287 aa). The 4-aspartylphosphate intermediate role is filled by D476. The Mg(2+) site is built by D669 and D673. A helical membrane pass occupies residues 727–749; that stretch reads LTWALGYNVVMLPLAAGAFLPAY. Residues 750 to 753 are Extracellular-facing; the sequence is GLAL. Residues 754-776 form a helical membrane-spanning segment; that stretch reads TPAIAGACMAVSSLAVVSNSLLL. At 777-790 the chain is on the cytoplasmic side; the sequence is RYWFRRSLNHSVSV.

It belongs to the cation transport ATPase (P-type) (TC 3.A.3) family. Type IB subfamily.

The protein localises to the cell membrane. It catalyses the reaction Cu(2+)(in) + ATP + H2O = Cu(2+)(out) + ADP + phosphate + H(+). Its function is as follows. Involved in copper transport. This chain is Probable copper-transporting ATPase SynA (synA), found in Synechococcus sp. (strain ATCC 27144 / PCC 6301 / SAUG 1402/1) (Anacystis nidulans).